A 1430-amino-acid chain; its full sequence is MTSAAEIKKPPVAPKPKFVVANNKPAPPPIAPKPDIVISSVPQSTKKMKPAIAPKPKVLKTSPVREIGQSPSRKIMLNLEGHKQELAESTDNFNCKYEGNQSNDYISPMCSCSSECIHKLGHRENLCVKQLVLEPLEMNENLENSKIDETLTIKTRSKCDLYGEKAKNQGGVVLKASVLEEELKDALIHQMPPFISAQKHRPTDSPEMNGGCNSNGQFRIEFADLSPSPSSFEKVPDHHSCHLQLPSDECEHFETCQDDSEKSNNCFQSSELEALENGKRSTLISSDGVSKKSEVKDLGPLEIHLVPYTPKFPTPKPRKTRTARLLRQKCVDTPSESTEEPGNSDSSSSCLTENSLKINKISVLHQNVLCKQEQVDKMKLGNKSELNMESNSDAQDLVNSQKAMCNETTSFEKMAPSFDKDSNLSSDSTTVDGSSMSLAVDEGTGFIRCTVSMSLPKQLKLTCNEHLQSGRNLGVSAPQMQKESVIKEENSLRIVPKKPQRHSLPATGVLKKAASEELLEKSSYPSSEEKSSEKSLERNHLQHLCAQNRGVSSSFDMPKRASEKPVWKLPHPILPFSGNPEFLKSVTVSSNSEPSTALTKPRAKSLSAMDVEKCTKPCKDSTKKNSFKKLLSMKLSICFMKSDFQKFWSKSSQLGDTTTGHLSSGEQKGIESDWQGLLVGEEKRSKPIKAYSTENYSLESQKKRKKSRGQTSAANGLRAESLDDQMLSRESSSQAPYKSVTSLCAPEYENIRHYEEIPEYENLPFIMAIRKTQELEWQNSSSMEDADANVYEVEEPYEAPDGQLQLGPRHQHSSSGASQEEQNDLGLGDLPSDEEEIINSSDEDDVSSESSKGEPDPLEDKQDEDNGMKSKVHHIAKEIMSSEKVFVDVLKLLHIDFRDAVAHASRQLGKPVIEDRILNQILYYLPQLYELNRDLLKELEERMLHWTEQQRIADIFVKKGPYLKMYSTYIKEFDKNIALLDEQCKKNPGFAAVVREFEMSPRCANLALKHYLLKPVQRIPQYRLLLTDYLKNLIEDAGDYRDTQDALAVVIEVANHANDTMKQGDNFQKLMQIQYSLNGHHEIVQPGRVFLKEGILMKLSRKVMQPRMFFLFNDALLYTTPVQSGMYKLNNMLSLAGMKVRKPTQEAYQNELKIESVERSFILSASSATERDEWLEAISRAIEEYAKKRITFCPSRSLDEADSENKEEVSPLGSKAPIWIPDTRATMCMICTSEFTLTWRRHHCRACGKIVCQACSSNKYGLDYLKNQPARVCEHCFQELQKLDHQHSPRIGSPGNHKSPSSALSSVLHSIPSGRKQKKIPAALKEVSANTEDSSMSGYLYRSKGNKKPWKHFWFVIKNKVLYTYAASEDVAALESQPLLGFTVIQVKDENSESKVFQLLHKNMLFYVFKAEDAHSAQKWIEAFQEGTIL.

Positions 1–36 (MTSAAEIKKPPVAPKPKFVVANNKPAPPPIAPKPDI) are disordered. A compositionally biased stretch (low complexity) spans 15 to 24 (KPKFVVANNK). The residue at position 231 (Ser-231) is a Phosphoserine. A disordered region spans residues 330 to 351 (CVDTPSESTEEPGNSDSSSSCL). Polar residues predominate over residues 334-351 (PSESTEEPGNSDSSSSCL). Ser-515 is subject to Phosphoserine. The disordered stretch occupies residues 516-538 (EELLEKSSYPSSEEKSSEKSLER). Residues 527 to 538 (SEEKSSEKSLER) show a composition bias toward basic and acidic residues. Ser-554, Ser-605, Ser-692, and Ser-721 each carry phosphoserine. 2 disordered regions span residues 695 to 739 (NYSL…PYKS) and 800 to 869 (PDGQ…NGMK). Positions 728 to 739 (SRESSSQAPYKS) are enriched in polar residues. Positions 831-847 (PSDEEEIINSSDEDDVS) are enriched in acidic residues. Residues 851 to 868 (SKGEPDPLEDKQDEDNGM) are compositionally biased toward basic and acidic residues. A DH domain is found at 871 to 1060 (KVHHIAKEIM…IEVANHANDT (190 aa)). The PH 1 domain maps to 1089-1183 (VFLKEGILMK…WLEAISRAIE (95 aa)). At Ser-1197 the chain carries Phosphoserine. An FYVE-type zinc finger spans residues 1222-1281 (DTRATMCMICTSEFTLTWRRHHCRACGKIVCQACSSNKYGLDYLKNQPARVCEHCFQELQ). 8 residues coordinate Zn(2+): Cys-1228, Cys-1231, Cys-1244, Cys-1247, Cys-1252, Cys-1255, Cys-1273, and Cys-1276. The region spanning 1333–1429 (DSSMSGYLYR…WIEAFQEGTI (97 aa)) is the PH 2 domain.

It localises to the cytoplasm. The protein localises to the cytoskeleton. May activate CDC42, a member of the Ras-like family of Rho- and Rac proteins, by exchanging bound GDP for free GTP. May play a role in regulating the actin cytoskeleton and cell shape. The chain is FYVE, RhoGEF and PH domain-containing protein 6 (FGD6) from Homo sapiens (Human).